Here is a 779-residue protein sequence, read N- to C-terminus: GATOR2 complex protein WDR24 (779 aa).

WD repeat units follow at residues 66–106, 112–152, 155–195, 199–239, 243–285, and 289–332; these read SLNF…RNKQ, EHKR…SVST, GQSE…RYER, AHTG…VKEI, QTFA…IPFA, and EHKD…VDRA. Disordered stretches follow at residues 506–526 and 570–590; these read LETN…EGQA and DHPS…VSGS. A C4-type zinc finger spans residues 707–729; the sequence is NCSNCKRPMSNKGWICDRCHQCA. Zn(2+)-binding residues include Cys-708, Cys-711, Cys-722, Cys-725, Cys-732, Cys-735, Cys-746, Cys-749, His-751, His-754, His-757, Cys-768, Cys-772, His-774, and Cys-776. The RING-type; atypical zinc-finger motif lies at 730 to 779; the sequence is SVCAVCHHVVKGLFVWCQGCSHGGHLEHVMEWLKQSKHCPAGCGHLCEYT.

This sequence belongs to the WD repeat WDR24 family. As to quaternary structure, component of the GATOR2 subcomplex, composed of MIOS, SEC13, SEH1L, WDR24 and WDR59. The GATOR2 complex interacts with CASTOR1 and CASTOR2; the interaction is negatively regulated by arginine. The GATOR2 complex interacts with SESN1, SESN2 and SESN3; the interaction is negatively regulated by amino acids.

The protein localises to the lysosome membrane. The enzyme catalyses S-ubiquitinyl-[E2 ubiquitin-conjugating enzyme]-L-cysteine + [acceptor protein]-L-lysine = [E2 ubiquitin-conjugating enzyme]-L-cysteine + N(6)-ubiquitinyl-[acceptor protein]-L-lysine.. The protein operates within protein modification; protein ubiquitination. With respect to regulation, the GATOR2 complex is negatively regulated by the upstream amino acid sensors CASTOR1 and SESN2, which sequester the GATOR2 complex in absence of amino acids. In the presence of abundant amino acids, GATOR2 is released from CASTOR1 and SESN2 and activated. In terms of biological role, catalytic component of the GATOR2 complex, a multiprotein complex that acts as an activator of the amino acid-sensing branch of the mTORC1 signaling pathway. The GATOR2 complex indirectly activates mTORC1 through the inhibition of the GATOR1 subcomplex. GATOR2 probably acts as an E3 ubiquitin-protein ligase toward GATOR1. In the presence of abundant amino acids, the GATOR2 complex mediates ubiquitination of the NPRL2 core component of the GATOR1 complex, leading to GATOR1 inactivation. In the absence of amino acids, GATOR2 is inhibited, activating the GATOR1 complex. In addition to its role in regulation of the mTORC1 complex, promotes the acidification of lysosomes and facilitates autophagic flux. Within the GATOR2 complex, WDR24 constitutes the catalytic subunit that mediates 'Lys-6'-linked ubiquitination of NPRL2. This Danio rerio (Zebrafish) protein is GATOR2 complex protein WDR24.